A 66-amino-acid polypeptide reads, in one-letter code: Surface composition regulator (66 aa).

The protein belongs to the GlgS family.

In terms of biological role, major determinant of cell surface composition. Negatively regulates motility, adhesion and synthesis of biofilm exopolysaccharides. This chain is Surface composition regulator, found in Escherichia coli O139:H28 (strain E24377A / ETEC).